Consider the following 828-residue polypeptide: Periplasmic nitrate reductase (828 aa).

Residues 1–31 (MKLSRRGFMKANAVAAAAAAAGLSVPGVARA) constitute a signal peptide (tat-type signal). Residues 39-95 (IKWDKAPCRFCGTGCGVLVGTQQGRVVACQGDPDAPVNRGLNCIKGYFLPKIMYGED) form the 4Fe-4S Mo/W bis-MGD-type domain. The [4Fe-4S] cluster site is built by cysteine 46, cysteine 49, cysteine 53, and cysteine 81. Mo-bis(molybdopterin guanine dinucleotide) contacts are provided by residues lysine 83, glutamine 150, asparagine 175, cysteine 179, 212 to 219 (WGANMAEM), 243 to 247 (STYQH), 262 to 264 (QSD), methionine 372, glutamine 376, asparagine 482, 508 to 509 (SD), lysine 531, aspartate 558, and 718 to 727 (TGRVLEHWHT). Substrate is bound at residue phenylalanine 794. 2 residues coordinate Mo-bis(molybdopterin guanine dinucleotide): asparagine 802 and lysine 819.

This sequence belongs to the prokaryotic molybdopterin-containing oxidoreductase family. NasA/NapA/NarB subfamily. In terms of assembly, component of the periplasmic nitrate reductase NapAB complex composed of NapA and NapB. It depends on [4Fe-4S] cluster as a cofactor. Mo-bis(molybdopterin guanine dinucleotide) serves as cofactor. Post-translationally, predicted to be exported by the Tat system. The position of the signal peptide cleavage has not been experimentally proven.

Its subcellular location is the periplasm. The enzyme catalyses 2 Fe(II)-[cytochrome] + nitrate + 2 H(+) = 2 Fe(III)-[cytochrome] + nitrite + H2O. In terms of biological role, catalytic subunit of the periplasmic nitrate reductase complex NapAB. Receives electrons from NapB and catalyzes the reduction of nitrate to nitrite. The protein is Periplasmic nitrate reductase of Shigella dysenteriae serotype 1 (strain Sd197).